A 332-amino-acid polypeptide reads, in one-letter code: Large ribosomal subunit protein uL29m (332 aa).

The interval 19–40 is disordered; sequence RFTKPKPKPAKRENVRLPTQRT. Positions 264 to 327 form a coiled coil; it reads TSENTESAIA…IQLQEEDAKN (64 aa).

It belongs to the universal ribosomal protein uL29 family. Component of the mitochondrial large ribosomal subunit. Mature mitochondrial ribosomes consist of a small (37S) and a large (54S) subunit. The 37S subunit contains at least 33 different proteins and 1 molecule of RNA (15S). The 54S subunit contains at least 45 different proteins and 1 molecule of RNA (21S).

The protein localises to the mitochondrion. This chain is Large ribosomal subunit protein uL29m (MRPL4), found in Kluyveromyces lactis (strain ATCC 8585 / CBS 2359 / DSM 70799 / NBRC 1267 / NRRL Y-1140 / WM37) (Yeast).